The following is a 264-amino-acid chain: 4-hydroxy-tetrahydrodipicolinate reductase (264 aa).

8 to 13 is an NAD(+) binding site; that stretch reads GPRGNM. Lys-36 contributes to the NADP(+) binding site. NAD(+)-binding positions include 97–99 and 123–126; these read GTT and APNF. His-153 functions as the Proton donor/acceptor in the catalytic mechanism. His-154 contacts (S)-2,3,4,5-tetrahydrodipicolinate. Catalysis depends on Lys-157, which acts as the Proton donor. 163-164 serves as a coordination point for (S)-2,3,4,5-tetrahydrodipicolinate; sequence GT.

The protein belongs to the DapB family.

It localises to the cytoplasm. The enzyme catalyses (S)-2,3,4,5-tetrahydrodipicolinate + NAD(+) + H2O = (2S,4S)-4-hydroxy-2,3,4,5-tetrahydrodipicolinate + NADH + H(+). It carries out the reaction (S)-2,3,4,5-tetrahydrodipicolinate + NADP(+) + H2O = (2S,4S)-4-hydroxy-2,3,4,5-tetrahydrodipicolinate + NADPH + H(+). It participates in amino-acid biosynthesis; L-lysine biosynthesis via DAP pathway; (S)-tetrahydrodipicolinate from L-aspartate: step 4/4. In terms of biological role, catalyzes the conversion of 4-hydroxy-tetrahydrodipicolinate (HTPA) to tetrahydrodipicolinate. The chain is 4-hydroxy-tetrahydrodipicolinate reductase from Shouchella clausii (strain KSM-K16) (Alkalihalobacillus clausii).